Consider the following 400-residue polypeptide: WD repeat and FYVE domain-containing protein 2 (400 aa).

6 WD repeats span residues 22–61 (GSQE…QYWP), 66–105 (AMPS…NKMT), 112–150 (AHQS…QRLG), 153–192 (RTSA…CTLL), 197–236 (GHTG…GTAI), and 240–279 (GHND…QETP). The segment at 281-352 (WLDSDSCQKC…VCDSCHEAIT (72 aa)) adopts an FYVE-type zinc-finger fold. Zn(2+)-binding residues include Cys287, Cys290, Cys314, Cys317, Cys322, Cys325, Cys344, and Cys347. One copy of the WD 7 repeat lies at 364–399 (DSKHNIVHVHFDATRGWLLTSGTDKVIKLWDMTPVV).

Homodimer. Interacts (via WD repeats 1-3) with AKT1, AKT2, PRKCZ and PRKCI. Interacts with VAMP2. Forms a complex with VAMP2 and PRKCZ. Interacts with FOXO1. Forms a complex with AKT1 and FOXO1. As to expression, highly expressed in the brain (at protein level).

The protein localises to the endosome. It localises to the early endosome. The protein resides in the cytoplasm. In terms of biological role, acts in an adapter protein-like fashion to mediate the interaction between the kinase PRKCZ and its substrate VAMP2 and increases the PRKCZ-dependent phosphorylation of VAMP2. Positively regulates adipocyte differentiation, by facilitating the phosphorylation and thus inactivation of the anti-adipogenetic transcription factor FOXO1 by the kinase AKT1. Plays a role in endosomal control of AKT2 signaling; required for insulin-stimulated AKT2 phosphorylation and glucose uptake and insulin-stimulated phosphorylation of AKT2 substrates. Participates in transferrin receptor endocytosis. The chain is WD repeat and FYVE domain-containing protein 2 (Wdfy2) from Mus musculus (Mouse).